Consider the following 91-residue polypeptide: Putative septation protein SpoVG (91 aa).

This sequence belongs to the SpoVG family.

Its function is as follows. Could be involved in septation. The protein is Putative septation protein SpoVG of Clostridium beijerinckii (strain ATCC 51743 / NCIMB 8052) (Clostridium acetobutylicum).